Here is a 328-residue protein sequence, read N- to C-terminus: Phenylalanine--tRNA ligase alpha subunit (328 aa).

Glutamate 253 contacts Mg(2+).

This sequence belongs to the class-II aminoacyl-tRNA synthetase family. Phe-tRNA synthetase alpha subunit type 1 subfamily. In terms of assembly, tetramer of two alpha and two beta subunits. Mg(2+) is required as a cofactor.

It is found in the cytoplasm. The catalysed reaction is tRNA(Phe) + L-phenylalanine + ATP = L-phenylalanyl-tRNA(Phe) + AMP + diphosphate + H(+). The polypeptide is Phenylalanine--tRNA ligase alpha subunit (Actinobacillus pleuropneumoniae serotype 5b (strain L20)).